The following is a 510-amino-acid chain: Aspartate kinase FUB3 (510 aa).

2 ACT domains span residues 372–440 (ILSN…VLPD) and 446–510 (LVGA…KNAI).

The protein belongs to the aspartokinase family.

It carries out the reaction L-aspartate + ATP = 4-phospho-L-aspartate + ADP. It functions in the pathway mycotoxin biosynthesis. Functionally, aspartate kinase; part of the gene cluster that mediates the biosynthesis of fusaric acid, a mycotoxin with low to moderate toxicity to animals and humans, but with high phytotoxic properties. L-aspartate is suggested as fusaric acid amino acid precursor that is activated and further processed to O-acetyl-L-homoserine by cluster enzymes aspartate kinase FUB3 and homoserine O-acetyltransferase FUB5, as well as enzymes of the primary metabolism. The polyketide synthase (PKS) FUB1 generates the triketide trans-2-hexenal which is presumptively released by the hydrolase FUB4 and linked to the NRPS-bound amino acid precursor by NAD(P)-dependent dehydrogenase FUB6. FUB1, FUB4, and the non-canonical NRPS Fub8 may form an enzyme complex. Further processing of the NRPS-bound intermediate might be carried out by FUB6 and the sulfhydrylase FUB7, enabling a spontaneous electrocyclization to close the carbon backbone of fusaric acid. Dihydrofusaric acid is likely to be released via reduction by the thioester reductase (TR) domain of FUB8 whereupon the final oxidation to fusaric acid may (also) be performed by the FMN-dependent dehydrogenase FUB9. In Gibberella fujikuroi (strain CBS 195.34 / IMI 58289 / NRRL A-6831) (Bakanae and foot rot disease fungus), this protein is Aspartate kinase FUB3.